Reading from the N-terminus, the 190-residue chain is Transcription factor bHLH162 (190 aa).

A compositionally biased stretch (polar residues) spans 1-12 (MEPSHSNTGQSR). Positions 1 to 21 (MEPSHSNTGQSRSVDRKTVEK) are disordered. The bHLH domain maps to 11 to 63 (SRSVDRKTVEKNRRMQMKSLYSELISLLPHHSSTEPLTLPDQLDEAANYIKKL).

The protein belongs to the bHLH protein family.

It localises to the nucleus. This Arabidopsis thaliana (Mouse-ear cress) protein is Transcription factor bHLH162.